The chain runs to 395 residues: Endophilin-B2 (395 aa).

An N-acetylmethionine modification is found at methionine 1. The membrane-binding amphipathic helix stretch occupies residues 1–27; the sequence is MDFNMKKLASDAGIFFTRAVQFTEEKF. A Phosphoserine modification is found at serine 10. Residues 24 to 287 enclose the BAR domain; the sequence is EEKFGQAEKT…LGRFPGTFVG (264 aa). Coiled coils occupy residues 116 to 132 and 206 to 240; these read IKVA…ERDF and ASAL…LLLE. The SH3 domain occupies 335-395; the sequence is SGTRKARVLY…VPVTYLELLS (61 aa). Serine 395 carries the phosphoserine modification.

This sequence belongs to the endophilin family. Homodimer, and heterodimer with SH3GLB1. As to expression, detected in skeletal muscle, adipocyte, brain, lung, colon and mammary gland.

The protein localises to the cytoplasm. This chain is Endophilin-B2 (SH3GLB2), found in Homo sapiens (Human).